The following is a 412-amino-acid chain: Tyrosine--tRNA ligase (412 aa).

The short motif at 48 to 57 (PSRPDLHLGH) is the 'HIGH' region element. Residues 232 to 236 (KMSKS) carry the 'KMSKS' region motif. An ATP-binding site is contributed by Lys-235. Positions 342–405 (VGLLNLMRHA…GKRRFARIRP (64 aa)) constitute an S4 RNA-binding domain.

The protein belongs to the class-I aminoacyl-tRNA synthetase family. TyrS type 2 subfamily. Homodimer.

The protein resides in the cytoplasm. The catalysed reaction is tRNA(Tyr) + L-tyrosine + ATP = L-tyrosyl-tRNA(Tyr) + AMP + diphosphate + H(+). Functionally, catalyzes the attachment of tyrosine to tRNA(Tyr) in a two-step reaction: tyrosine is first activated by ATP to form Tyr-AMP and then transferred to the acceptor end of tRNA(Tyr). The polypeptide is Tyrosine--tRNA ligase (Salinibacter ruber (strain DSM 13855 / M31)).